The following is a 652-amino-acid chain: Phosphomethylpyrimidine synthase (652 aa).

2 disordered regions span residues 1-45 and 118-166; these read MVSR…SVSA and QRGD…LDGR. The span at 8–45 shows a compositional bias: low complexity; that stretch reads SSSSTSKAVTSSPSTSSLSSAASSPSVSSSSSSSSVSA. A compositionally biased stretch (gly residues) spans 134 to 162; that stretch reads GASGPGTLGSGTPGSGTPGSGPLGLGGTD. Residues Asn245, Met274, Tyr303, His339, 359–361, 400–403, and Glu439 contribute to the substrate site; these read SRG and DGLR. Zn(2+) is bound at residue His443. Tyr466 contacts substrate. His507 contacts Zn(2+). [4Fe-4S] cluster-binding residues include Cys587, Cys590, and Cys595.

The protein belongs to the ThiC family. It depends on [4Fe-4S] cluster as a cofactor.

The enzyme catalyses 5-amino-1-(5-phospho-beta-D-ribosyl)imidazole + S-adenosyl-L-methionine = 4-amino-2-methyl-5-(phosphooxymethyl)pyrimidine + CO + 5'-deoxyadenosine + formate + L-methionine + 3 H(+). Its pathway is cofactor biosynthesis; thiamine diphosphate biosynthesis. Catalyzes the synthesis of the hydroxymethylpyrimidine phosphate (HMP-P) moiety of thiamine from aminoimidazole ribotide (AIR) in a radical S-adenosyl-L-methionine (SAM)-dependent reaction. This is Phosphomethylpyrimidine synthase from Frankia casuarinae (strain DSM 45818 / CECT 9043 / HFP020203 / CcI3).